We begin with the raw amino-acid sequence, 596 residues long: Aspartate--tRNA(Asp/Asn) ligase (596 aa).

E172 serves as a coordination point for L-aspartate. Residues 196 to 199 (QLFK) are aspartate. Position 218 (R218) interacts with L-aspartate. ATP contacts are provided by residues 218–220 (RDE) and Q227. H455 lines the L-aspartate pocket. Residue E489 coordinates ATP. Residue R496 participates in L-aspartate binding. 541-544 (GLDR) provides a ligand contact to ATP.

This sequence belongs to the class-II aminoacyl-tRNA synthetase family. Type 1 subfamily. In terms of assembly, homodimer.

It is found in the cytoplasm. The enzyme catalyses tRNA(Asx) + L-aspartate + ATP = L-aspartyl-tRNA(Asx) + AMP + diphosphate. In terms of biological role, aspartyl-tRNA synthetase with relaxed tRNA specificity since it is able to aspartylate not only its cognate tRNA(Asp) but also tRNA(Asn). Reaction proceeds in two steps: L-aspartate is first activated by ATP to form Asp-AMP and then transferred to the acceptor end of tRNA(Asp/Asn). This chain is Aspartate--tRNA(Asp/Asn) ligase, found in Bordetella bronchiseptica (strain ATCC BAA-588 / NCTC 13252 / RB50) (Alcaligenes bronchisepticus).